Consider the following 426-residue polypeptide: Probable inactive metalloprotease YmfF (426 aa).

2 residues coordinate Zn(2+): His50 and Glu138.

The protein belongs to the peptidase M16 family.

This chain is Probable inactive metalloprotease YmfF (ymfF), found in Bacillus subtilis (strain 168).